A 252-amino-acid chain; its full sequence is PF03932 family protein CutC (252 aa).

It belongs to the CutC family.

It is found in the cytoplasm. The protein is PF03932 family protein CutC of Serratia proteamaculans (strain 568).